A 462-amino-acid chain; its full sequence is Calcitonin gene-related peptide type 1 receptor (462 aa).

A signal peptide spans Met1–Ala22. The Extracellular portion of the chain corresponds to Glu23–Leu140. 3 cysteine pairs are disulfide-bonded: Cys49–Cys75, Cys66–Cys106, and Cys89–Cys128. N-linked (GlcNAc...) asparagine glycosylation is found at Asn67, Asn119, and Asn124. A helical transmembrane segment spans residues Asn141–Phe165. The Cytoplasmic segment spans residues Tyr166 to Thr176. A helical membrane pass occupies residues Leu177 to Val199. At Ala200 to Pro210 the chain is on the extracellular side. A helical transmembrane segment spans residues Val211–His239. The Cytoplasmic segment spans residues Thr240 to Leu253. A helical membrane pass occupies residues Met254–Ala274. Topologically, residues Arg275–Gln290 are extracellular. The segment at Thr289–Gln290 is required for RAMP3 interaction. A helical transmembrane segment spans residues Leu291–Arg315. The Cytoplasmic portion of the chain corresponds to Val316–Asn330. Residues Leu331–Leu352 form a helical membrane-spanning segment. At Ile353 to Asp367 the chain is on the extracellular side. The chain crosses the membrane as a helical span at residues Tyr368–Phe388. Over Asn389–Asp462 the chain is Cytoplasmic. Residues Ser421 and Ser446 each carry the phosphoserine modification.

The protein belongs to the G-protein coupled receptor 2 family. Heterodimer of CALCRL and RAMP1; the receptor complex functions as CGRP receptor. Heterodimer of CALCRL and RAMP2 or CALCRL and RAMP3; the complexes function as adrenomedullin receptor.

It localises to the cell membrane. G protein-coupled receptor which specificity is determined by its interaction with receptor-activity-modifying proteins (RAMPs). Together with RAMP1, form the receptor complex for calcitonin-gene-related peptides CALCA/CGRP1 and CALCB/CGRP2. Together with RAMP2 or RAMP3, function as receptor complexes for adrenomedullin (ADM and ADM2). Ligand binding causes a conformation change that triggers signaling via guanine nucleotide-binding proteins (G proteins) and modulates the activity of downstream effectors. Activates cAMP-dependent pathway. The chain is Calcitonin gene-related peptide type 1 receptor (CALCRL) from Bos taurus (Bovine).